The chain runs to 432 residues: C-type cytochrome OmcS (432 aa).

A signal peptide spans 1–25 (MKKGMKVSLSVAAAALLMSAPAAFA).

The cofactor is heme.

It is found in the cell outer membrane. It localises to the cell surface. Its function is as follows. Plays an important role in extracellular electron transfer. Can transfer electrons to insoluble Fe(3+) oxides as well as other extracellular electron acceptors, including Mn(4+) oxide and humic substances. Essential for direct interspecies electron transfer (DIET) in cocultures with G.metallireducens. This Geobacter sulfurreducens (strain ATCC 51573 / DSM 12127 / PCA) protein is C-type cytochrome OmcS.